Reading from the N-terminus, the 1813-residue chain is Nonribosomal peptide synthetase 1 (1813 aa).

The segment at 89–494 (EKARRDPSRQ…GRGDQQVKLR (406 aa)) is adenylation. Residues 624 to 699 (EPQSERERQL…ELAITLKHSD (76 aa)) enclose the Carrier 1 domain. An O-(pantetheine 4'-phosphoryl)serine modification is found at serine 660. The interval 738–1159 (DVYPCTTLQE…LPMTDDELAE (422 aa)) is condensation 1. Residues 1282-1358 (QVTTPKQQKL…DMADIAKESL (77 aa)) form the Carrier 2 domain. Position 1319 is an O-(pantetheine 4'-phosphoryl)serine (serine 1319). Positions 1427–1806 (FYLDAAVDQS…STLFQTDVME (380 aa)) are condensation 2.

Belongs to the NRP synthetase family.

Its pathway is siderophore biosynthesis. Nonribosomal peptide synthetase; part of the gene cluster that mediates the biosynthesis of hydroxamate-containing siderophores that play a critical role in virulence via intracellular iron acquisition during macrophage infection. In Ajellomyces capsulatus (Darling's disease fungus), this protein is Nonribosomal peptide synthetase 1.